The primary structure comprises 438 residues: Methionine aminopeptidase 2 (438 aa).

The disordered stretch occupies residues 1–89; it reads MAAQAAPAEE…LFPNKQYPKG (89 aa). Basic and acidic residues predominate over residues 10-20; that stretch reads ELSKLSVEETK. A compositionally biased stretch (basic residues) spans 51-65; that stretch reads AKKKKKRKPRKKKKA. Residue H191 coordinates substrate. A divalent metal cation contacts are provided by D211, D222, and H291. Position 299 (H299) interacts with substrate. A divalent metal cation is bound by residues E324 and E419.

This sequence belongs to the peptidase M24A family. Methionine aminopeptidase eukaryotic type 2 subfamily. It depends on Co(2+) as a cofactor. Zn(2+) is required as a cofactor. Mn(2+) serves as cofactor. The cofactor is Fe(2+).

The protein resides in the cytoplasm. The enzyme catalyses Release of N-terminal amino acids, preferentially methionine, from peptides and arylamides.. Its function is as follows. Cotranslationally removes the N-terminal methionine from nascent proteins. The N-terminal methionine is often cleaved when the second residue in the primary sequence is small and uncharged (Met-Ala-, Cys, Gly, Pro, Ser, Thr, or Val). This Sordaria macrospora (strain ATCC MYA-333 / DSM 997 / K(L3346) / K-hell) protein is Methionine aminopeptidase 2.